The primary structure comprises 257 residues: UPF0246 protein Shewana3_3143 (257 aa).

The protein belongs to the UPF0246 family.

This Shewanella sp. (strain ANA-3) protein is UPF0246 protein Shewana3_3143.